A 326-amino-acid polypeptide reads, in one-letter code: MELIDSFGRRINYLRLSVTDRCNLRCSYCMPAEGVEKLAHGDILSYEDLFRIARAAVAIGIEKIRITGGEPLVRKGIVPFLARIAAIEGLRQLVLTTNGLLLPEMAADLRSAGVQRLNISLDSLRADTFRAITRIGELQRVLDGIAAADAAGFPPPKINMVVMRGVNDGEVADFARLTIDRPCTVRFIEYMPATRENNWQSLTVPGREILDRISASYELEPVEKGACAGPSRDFRIRGAAGTLGVITAVSGHFCGDCNRVRVTSTGMAKSCLFSDEGFDLRPFLETSDPIILQEALRRIVGVKPERHGMSACKAEHQAFSMAKIGG.

The Radical SAM core domain maps to 6-220; it reads SFGRRINYLR…DRISASYELE (215 aa). GTP is bound at residue Arg15. Residues Cys22 and Cys26 each coordinate [4Fe-4S] cluster. An S-adenosyl-L-methionine-binding site is contributed by Tyr28. [4Fe-4S] cluster is bound at residue Cys29. A GTP-binding site is contributed by Arg65. Residue Gly69 coordinates S-adenosyl-L-methionine. Thr96 provides a ligand contact to GTP. An S-adenosyl-L-methionine-binding site is contributed by Ser120. Residue Lys157 coordinates GTP. Met191 serves as a coordination point for S-adenosyl-L-methionine. The [4Fe-4S] cluster site is built by Cys254 and Cys257. 259-261 serves as a coordination point for GTP; it reads RVR. Cys271 contacts [4Fe-4S] cluster.

Belongs to the radical SAM superfamily. MoaA family. Monomer and homodimer. [4Fe-4S] cluster is required as a cofactor.

The enzyme catalyses GTP + AH2 + S-adenosyl-L-methionine = (8S)-3',8-cyclo-7,8-dihydroguanosine 5'-triphosphate + 5'-deoxyadenosine + L-methionine + A + H(+). The protein operates within cofactor biosynthesis; molybdopterin biosynthesis. Functionally, catalyzes the cyclization of GTP to (8S)-3',8-cyclo-7,8-dihydroguanosine 5'-triphosphate. This Geobacter sulfurreducens (strain ATCC 51573 / DSM 12127 / PCA) protein is GTP 3',8-cyclase.